The sequence spans 254 residues: Sugar fermentation stimulation protein homolog (254 aa).

It belongs to the SfsA family.

This is Sugar fermentation stimulation protein homolog from Synechococcus sp. (strain CC9605).